The sequence spans 204 residues: Superoxide dismutase [Mn] (204 aa).

Residues His-29, His-84, Asp-167, and His-171 each contribute to the Mn(2+) site.

This sequence belongs to the iron/manganese superoxide dismutase family. Homotetramer. Mn(2+) serves as cofactor.

It catalyses the reaction 2 superoxide + 2 H(+) = H2O2 + O2. In terms of biological role, destroys superoxide anion radicals which are normally produced within the cells and which are toxic to biological systems. The protein is Superoxide dismutase [Mn] (sodA) of Thermus aquaticus.